The sequence spans 370 residues: 2-Hydroxyacid oxidase 1 (370 aa).

The FMN hydroxy acid dehydrogenase domain occupies methionine 1 to leucine 365. Tyrosine 26 lines the glyoxylate pocket. FMN is bound by residues alanine 79 to alanine 81, serine 108, and glutamine 130. Residue tyrosine 132 participates in glyoxylate binding. Threonine 158 is a binding site for FMN. Arginine 167 provides a ligand contact to glyoxylate. The residue at position 184 (lysine 184) is an N6-succinyllysine. Residues serine 194 and serine 230 each carry the phosphoserine modification. 2 residues coordinate FMN: lysine 236 and serine 258. 2 residues coordinate glyoxylate: histidine 260 and arginine 263. Histidine 260 functions as the Proton acceptor in the catalytic mechanism. FMN contacts are provided by residues aspartate 291–arginine 295 and glycine 314–arginine 315. The short motif at serine 368 to isoleucine 370 is the Microbody targeting signal element.

Belongs to the FMN-dependent alpha-hydroxy acid dehydrogenase family. Homotetramer. FMN is required as a cofactor. Highly expressed in liver.

The protein localises to the peroxisome matrix. It catalyses the reaction a (2S)-2-hydroxycarboxylate + O2 = a 2-oxocarboxylate + H2O2. The catalysed reaction is glycolate + O2 = glyoxylate + H2O2. It carries out the reaction glyoxylate + O2 + H2O = oxalate + H2O2 + H(+). The enzyme catalyses 2-hydroxyhexadecanoate + O2 = 2-oxohexadecanoate + H2O2. It catalyses the reaction 2-hydroxyoctanoate + O2 = 2-oxooctanoate + H2O2. It functions in the pathway amino-acid biosynthesis; glycine biosynthesis. With respect to regulation, inhibited by its product oxalate. Inhibited by high concentrations of dichlorophenolindophenol (DCIP) in vitro. Broad substrate specificity (S)-2-hydroxy-acid oxidase that preferentially oxidizes glycolate. The glyoxylate produced by the oxidation of glycolate can then be utilized by alanine-glyoxylate aminotransferase for the peroxisomal synthesis of glycine; this pathway appears to be an important step for the detoxification of glyoxylate which, if allowed to accumulate, may be metabolized to oxalate with formation of kidney stones. Can also catalyze the oxidation of glyoxylate, and long chain hydroxyacids such as 2-hydroxyhexadecanoate and 2-hydroxyoctanoate, albeit with much lower catalytic efficiency. Active in vitro with the artificial electron acceptor 2,6-dichlorophenolindophenol (DCIP), but O2 is believed to be the physiological electron acceptor, leading to the production of H2O2. Is not active on L-lactate and 2-hydroxybutanoate. This is 2-Hydroxyacid oxidase 1 from Homo sapiens (Human).